Reading from the N-terminus, the 424-residue chain is 3-ketoacyl-CoA thiolase A, peroxisomal (424 aa).

A peroxisome-targeting transit peptide spans 1–26; sequence MHRLQVVLGHLAGRPESSSALQAAPC. The segment at 1–26 is PTS2-type peroxisomal targeting signal; it reads MHRLQVVLGHLAGRPESSSALQAAPC. Residue cysteine 123 is the Acyl-thioester intermediate of the active site. An N6-acetyllysine mark is found at lysine 173 and lysine 234. Catalysis depends on proton acceptor residues histidine 377 and cysteine 408.

It belongs to the thiolase-like superfamily. Thiolase family. In terms of assembly, homodimer. Interacts (via PTS2-type peroxisomal targeting signal region) with PEX7; leading to its translocation into peroxisomes. In terms of tissue distribution, mainly expressed in liver and intestine.

The protein localises to the peroxisome. It carries out the reaction an acyl-CoA + acetyl-CoA = a 3-oxoacyl-CoA + CoA. The enzyme catalyses 2 acetyl-CoA = acetoacetyl-CoA + CoA. It catalyses the reaction tetradecanoyl-CoA + acetyl-CoA = 3-oxohexadecanoyl-CoA + CoA. The catalysed reaction is hexanoyl-CoA + acetyl-CoA = 3-oxooctanoyl-CoA + CoA. It carries out the reaction 3-oxohexadecanedioyl-CoA + CoA = tetradecanedioyl-CoA + acetyl-CoA. The enzyme catalyses 3-oxo-(6Z,9Z,12Z,15Z,18Z,21Z)-tetracosahexaenoyl-CoA + CoA = (4Z,7Z,10Z,13Z,16Z,19Z)-docosahexaenoyl-CoA + acetyl-CoA. Its pathway is lipid metabolism; peroxisomal fatty acid beta-oxidation. Functionally, responsible for the thiolytic cleavage of straight chain 3-keto fatty acyl-CoAs (3-oxoacyl-CoAs). Plays an important role in fatty acid peroxisomal beta-oxidation. Catalyzes the cleavage of short, medium, long, and very long straight chain 3-oxoacyl-CoAs. This Mus musculus (Mouse) protein is 3-ketoacyl-CoA thiolase A, peroxisomal.